Reading from the N-terminus, the 308-residue chain is Ribose 1,5-bisphosphate isomerase (308 aa).

Residues 24 to 27 (RGAG) and arginine 67 contribute to the substrate site. The active-site Proton acceptor is cysteine 129. Aspartate 198 (proton donor) is an active-site residue. Residues 208 to 209 (NK) and lysine 234 each bind substrate.

It belongs to the eIF-2B alpha/beta/delta subunits family. R15P isomerase subfamily.

It carries out the reaction alpha-D-ribose 1,5-bisphosphate = D-ribulose 1,5-bisphosphate. Functionally, catalyzes the isomerization of ribose 1,5-bisphosphate (R15P) to ribulose 1,5-bisphosphate (RuBP), the CO(2) acceptor and substrate for RubisCO. Functions in an archaeal AMP degradation pathway, together with AMP phosphorylase and RubisCO. The sequence is that of Ribose 1,5-bisphosphate isomerase from Methanocaldococcus jannaschii (strain ATCC 43067 / DSM 2661 / JAL-1 / JCM 10045 / NBRC 100440) (Methanococcus jannaschii).